The following is a 528-amino-acid chain: GMP synthase [glutamine-hydrolyzing] (528 aa).

The region spanning 13 to 204 (AIVILDFGSQ…VYDICSCEPD (192 aa)) is the Glutamine amidotransferase type-1 domain. The active-site Nucleophile is the Cys90. Active-site residues include His178 and Glu180. Residues 205–403 (WTTNLFIDEA…LGLPDEIVRR (199 aa)) form the GMPS ATP-PPase domain. Position 232-238 (232-238 (SGGVDSS)) interacts with ATP.

In terms of assembly, homodimer.

It carries out the reaction XMP + L-glutamine + ATP + H2O = GMP + L-glutamate + AMP + diphosphate + 2 H(+). The protein operates within purine metabolism; GMP biosynthesis; GMP from XMP (L-Gln route): step 1/1. Its function is as follows. Catalyzes the synthesis of GMP from XMP. In Prochlorococcus marinus (strain NATL1A), this protein is GMP synthase [glutamine-hydrolyzing].